We begin with the raw amino-acid sequence, 932 residues long: MAAQPRGGDYRGFFLLSILLGTPWEAWAGRILYSVSEETDKGSFVGDIAKDLGLEPRELAERGVRIISRGRTQLFALNQRSGSLVTAGRIDREEICAQSARCLVNFNILMEDKMNLYPIDVEIIDINDNVPRFLTEEINVKIMENTAPGVRFPLSEAGDPDVGTNSLQSYQLSPNRHFSLAVQSGDDETKYPELVLERVLDREEERVHHLVLTASDGGDPPRSSTAHIQVTVVDVNDHTPVFSLPQYQVTVPENVPVGTRLLTVHAIDLDEGVNGEVTYSFRKITPKLPKMFHLNSLTGEISTLEGLDYEETAFYEMEVQAQDGPGSLTKAKVLITVLDVNDNAPEVTMTSLSSSIPEDTPLGTVIALFYLQDRDSGKNGEVTCTIPENLPFKLEKSIDNYYRLVTTKNLDRETLSLYNITLKATDGGTPPLSRETHIFMQVADTNDNPPTFPHSSYSVYIAENNPRGASIFLVTAQDHDSEDNAQITYSLAEDTIQGAPVSSYVSINSDTGVLYALQSFDYEQLRELQLRVTAHDSGDPPLSSNMSLSLFVLDQNDNPPEILYPALPTDGSTGMELAPRSAEPGYLVTKVVAVDKDSGQNAWLSYLLLKASEPGLFAVGLYTGEVRTARALLDRDALKQSLVVAVQDHGQPPLSATVTLTVAVADSIPEVLADLGSLEPSDGPYNYDLTLYLVVAVATVSCVFLAFVLVLLALRLRRWHKSRLLQASEGGLANVPTSHFVGMDGVQAFLQTYSHEVSLTADSRKSHLIFPQPNYVDMLISQESCEKNDSLLTSVDFQECKENLPSIQQAPPNTDWRFSQAQRPGTSGSQNGDDTGTWPNNQFDTEMLQAMILASASEAADGSSTLGGGAGTMGLSARYGPQFTLQHVPDYRQNVYIPGSNATLTNAAGKRDGKAPAGGNGNKKKSGKKEKK.

The N-terminal stretch at 1 to 28 is a signal peptide; sequence MAAQPRGGDYRGFFLLSILLGTPWEAWA. Cadherin domains lie at 29–133, 134–242, 243–347, 348–452, 453–562, and 570–682; these read GRIL…VPRF, LTEE…TPVF, SLPQ…APEV, TMTS…PPTF, PHSS…PPEI, and DGST…EPSD. Residues 29-692 lie on the Extracellular side of the membrane; that stretch reads GRILYSVSEE…GPYNYDLTLY (664 aa). N-linked (GlcNAc...) asparagine glycosylation is found at Asn419 and Asn545. Residues 693–713 form a helical membrane-spanning segment; the sequence is LVVAVATVSCVFLAFVLVLLA. Residues 714 to 932 lie on the Cytoplasmic side of the membrane; the sequence is LRLRRWHKSR…KKKSGKKEKK (219 aa). Disordered regions lie at residues 805–841 and 902–932; these read PSIQQAPPNTDWRFSQAQRPGTSGSQNGDDTGTWPNN and ATLTNAAGKRDGKAPAGGNGNKKKSGKKEKK. A compositionally biased stretch (basic residues) spans 922–932; that stretch reads NKKKSGKKEKK.

The protein resides in the cell membrane. Its function is as follows. Potential calcium-dependent cell-adhesion protein. May be involved in the establishment and maintenance of specific neuronal connections in the brain. The sequence is that of Protocadherin gamma-A7 (PCDHGA7) from Homo sapiens (Human).